The following is a 66-amino-acid chain: Large ribosomal subunit protein uL29 (66 aa).

Belongs to the universal ribosomal protein uL29 family.

This Fervidobacterium nodosum (strain ATCC 35602 / DSM 5306 / Rt17-B1) protein is Large ribosomal subunit protein uL29.